Reading from the N-terminus, the 252-residue chain is Carbonic anhydrase (252 aa).

An N-terminal signal peptide occupies residues 1–26 (MPRFPRTLPRLTAVLLLACTAFSAAA). Residues 31 to 252 (THWGYTGHDS…QPLNARVVIE (222 aa)) form the Alpha-carbonic anhydrase domain. Cys54 and Cys207 are oxidised to a cystine. His92 serves as the catalytic Proton acceptor. Positions 118, 120, and 137 each coordinate Zn(2+). Substrate is bound at residue 203–204 (TT).

Belongs to the alpha-carbonic anhydrase family. In terms of assembly, homodimer. Zn(2+) is required as a cofactor.

It is found in the periplasm. The enzyme catalyses hydrogencarbonate + H(+) = CO2 + H2O. Reversible hydration of carbon dioxide. This chain is Carbonic anhydrase (cah), found in Neisseria gonorrhoeae.